The primary structure comprises 503 residues: Cell wall integrity and stress response component 2 (503 aa).

The N-terminal stretch at 1–23 is a signal peptide; the sequence is MHLDLIHKSFILVWLIYIRAALA. Topologically, residues 24 to 325 are extracellular; it reads DQFTYKACYS…KGLSGGAIAG (302 aa). One can recognise a WSC domain in the interval 25–118; that stretch reads QFTYKACYSA…SSAMNVYINN (94 aa). The disordered stretch occupies residues 124 to 260; sequence DSTSSTATST…STPSSTSIGT (137 aa). The chain crosses the membrane as a helical span at residues 326–346; the sequence is VVVGVVCGTVALLALALFFFV. The Cytoplasmic portion of the chain corresponds to 347-503; it reads WKKRRQSSQH…AKDSNNSSLR (157 aa). Thr-402 carries the phosphothreonine modification. A phosphoserine mark is found at Ser-455 and Ser-458. The tract at residues 470–503 is disordered; it reads IVNPDNVSSNIGSNVSDGDDDYDDAKDSNNSSLR.

N-glycosylated.

It is found in the cell membrane. The polypeptide is Cell wall integrity and stress response component 2 (WSC2) (Saccharomyces cerevisiae (strain ATCC 204508 / S288c) (Baker's yeast)).